The chain runs to 602 residues: MEALKVWSLTATPLKQLLRLSSSSTRLATTIYGRRSYHLSPALRCASAASSSSSSATTAETSKPSGRNRRSASSSNSTSDREAIRSIRLKKVEELRGQGLEPYAYKWEKSHSANQLQEIYKHLANGEESDNEIDCVSIAGRVVARRAFGKLAFLTLRDDSGTIQLYCEKERLSDDQFEQLKQFIDIGDILGASGSMKRTEKGELSICVNSFSILTKSLLPLPDKYHGLTDIDKRYRQRYVDMIANPEVADVFRRRAKIVSEIRKTVESFGYLEVETPVLQGAAGGAEARPFVTFHNSLGRDLYLRIATELHLKRMLVGGFEKVYEIGRIFRNEGISTRHNPEFTTIEMYEAYSDYHSMMDMAELIVTQCSMAVNGKLTIDYQGTEICLERPWRRETMHNLVKEITGINFSELGEDLGNAKDTVLLALQDVLEPKDKSGIRACSSLGHLLNEIFEVVVEPKLVQPTFVLDYPIEISPLAKPHRGNAGLTERFELFICGREMANAFSELTDPVDQRTRLEEQVRQHNAKRAEAVRESPEPNAKKDDDDDESYEVTLDEDFLTALEYGMPPASGMGLGIDRLVMLLTNSASIRDVIAFPVLKLQQ.

The segment covering 50-62 (SSSSSSATTAETS) has biased composition (low complexity). The tract at residues 50 to 83 (SSSSSSATTAETSKPSGRNRRSASSSNSTSDREA) is disordered. The OB DNA-binding region spans 136-214 (VSIAGRVVAR…SICVNSFSIL (79 aa)). Substrate is bound by residues Gly285 and Glu309. ATP is bound by residues 331–333 (RNE) and 339–340 (HN). Substrate-binding residues include Glu347 and Tyr349. Ca(2+) contacts are provided by Glu492 and Glu499. 499–500 (EM) is a binding site for ATP. The substrate site is built by Asn502 and Glu506. Positions 524–543 (HNAKRAEAVRESPEPNAKKD) are enriched in basic and acidic residues. The tract at residues 524-550 (HNAKRAEAVRESPEPNAKKDDDDDESY) is disordered. ATP is bound at residue 575–578 (GIDR).

The protein belongs to the class-II aminoacyl-tRNA synthetase family. The cofactor is Ca(2+).

The protein localises to the plastid. It localises to the chloroplast. Its subcellular location is the mitochondrion. The catalysed reaction is tRNA(Lys) + L-lysine + ATP = L-lysyl-tRNA(Lys) + AMP + diphosphate. Its function is as follows. Catalyzes the specific attachment of an amino acid to its cognate tRNA in a 2 step reaction: the amino acid (AA) is first activated by ATP to form AA-AMP and then transferred to the acceptor end of the tRNA. In Arabidopsis thaliana (Mouse-ear cress), this protein is Lysine--tRNA ligase, chloroplastic/mitochondrial.